The chain runs to 347 residues: MESFVTLYVLPGLLILLKSVALIVILLVGVAYILYADRKIWAAVQLRRGPNVVGPWGLFQAFADLFKFVFKEPVIPSGANKGVFLLAPVVAAGLALAAWAVIPVSEGWAIANINVGILYVFAIASLEVYGVIMAGWASNSKYPFLGALRSAAQMVSYEVSIGFVIVTVLLAVGSLNLTDIVLSQRDGLGTMVGLPNSFLDWHWLALFPMFIIFFISALAETNRPPFDLVEAESELVAGHMIEYSSTPFLLFFLGEYVAIVLMCALTTILFLGGWLPPFDFAPFTWVPGVVWFVLKLVAVFFMFALVKSFVPRYRYDQLMRLGWKVFLPISLFMVVATAAFLKFTGLV.

9 consecutive transmembrane segments (helical) span residues 13 to 33, 50 to 70, 82 to 102, 115 to 135, 161 to 181, 198 to 218, 248 to 268, 286 to 306, and 321 to 341; these read LLIL…VAYI, PNVV…KFVF, GVFL…WAVI, VGIL…IMAG, IGFV…TDIV, FLDW…ISAL, FLLF…LTTI, VPGV…FALV, and LGWK…AAFL.

It belongs to the complex I subunit 1 family. In terms of assembly, NDH-1 is composed of 14 different subunits. Subunits NuoA, H, J, K, L, M, N constitute the membrane sector of the complex.

Its subcellular location is the cell inner membrane. The catalysed reaction is a quinone + NADH + 5 H(+)(in) = a quinol + NAD(+) + 4 H(+)(out). Functionally, NDH-1 shuttles electrons from NADH, via FMN and iron-sulfur (Fe-S) centers, to quinones in the respiratory chain. The immediate electron acceptor for the enzyme in this species is believed to be ubiquinone. Couples the redox reaction to proton translocation (for every two electrons transferred, four hydrogen ions are translocated across the cytoplasmic membrane), and thus conserves the redox energy in a proton gradient. This subunit may bind ubiquinone. This chain is NADH-quinone oxidoreductase subunit H, found in Chelativorans sp. (strain BNC1).